The sequence spans 144 residues: 3-dehydroquinate dehydratase (144 aa).

The active-site Proton acceptor is the tyrosine 24. Asparagine 73, histidine 79, and aspartate 86 together coordinate substrate. Catalysis depends on histidine 99, which acts as the Proton donor. Substrate is bound by residues 100 to 101 (LS) and arginine 110.

The protein belongs to the type-II 3-dehydroquinase family. In terms of assembly, homododecamer.

The catalysed reaction is 3-dehydroquinate = 3-dehydroshikimate + H2O. It participates in metabolic intermediate biosynthesis; chorismate biosynthesis; chorismate from D-erythrose 4-phosphate and phosphoenolpyruvate: step 3/7. Functionally, catalyzes a trans-dehydration via an enolate intermediate. The chain is 3-dehydroquinate dehydratase from Shewanella sp. (strain ANA-3).